The sequence spans 338 residues: Fructose-bisphosphate aldolase (338 aa).

2 residues coordinate substrate: Arg50 and Lys138. Glu179 (proton acceptor) is an active-site residue. Lys221 (schiff-base intermediate with dihydroxyacetone-P) is an active-site residue.

It belongs to the class I fructose-bisphosphate aldolase family.

It carries out the reaction beta-D-fructose 1,6-bisphosphate = D-glyceraldehyde 3-phosphate + dihydroxyacetone phosphate. The protein operates within carbohydrate degradation; glycolysis; D-glyceraldehyde 3-phosphate and glycerone phosphate from D-glucose: step 4/4. This is Fructose-bisphosphate aldolase from Encephalitozoon cuniculi (strain GB-M1) (Microsporidian parasite).